A 174-amino-acid polypeptide reads, in one-letter code: Large ribosomal subunit protein uL10 (174 aa).

The protein belongs to the universal ribosomal protein uL10 family. In terms of assembly, part of the ribosomal stalk of the 50S ribosomal subunit. The N-terminus interacts with L11 and the large rRNA to form the base of the stalk. The C-terminus forms an elongated spine to which L12 dimers bind in a sequential fashion forming a multimeric L10(L12)X complex.

Its function is as follows. Forms part of the ribosomal stalk, playing a central role in the interaction of the ribosome with GTP-bound translation factors. The protein is Large ribosomal subunit protein uL10 of Synechococcus sp. (strain RCC307).